The following is a 121-amino-acid chain: Alpha-lactalbumin (121 aa).

The region spanning 1-121 (IDYRKCQASQ…CLEDLDQWRC (121 aa)) is the C-type lysozyme domain. Cystine bridges form between Cys-6–Cys-121, Cys-28–Cys-112, Cys-61–Cys-77, and Cys-73–Cys-91. Residue Asn-44 is glycosylated (N-linked (GlcNAc...) asparagine). Residues Lys-79, Asp-82, Asp-84, Asp-87, and Asp-88 each coordinate Ca(2+).

The protein belongs to the glycosyl hydrolase 22 family. As to quaternary structure, lactose synthase (LS) is a heterodimer of a catalytic component, beta1,4-galactosyltransferase (beta4Gal-T1) and a regulatory component, alpha-lactalbumin (LA). As to expression, mammary gland specific. Secreted in milk.

Its subcellular location is the secreted. Regulatory subunit of lactose synthase, changes the substrate specificity of galactosyltransferase in the mammary gland making glucose a good acceptor substrate for this enzyme. This enables LS to synthesize lactose, the major carbohydrate component of milk. In other tissues, galactosyltransferase transfers galactose onto the N-acetylglucosamine of the oligosaccharide chains in glycoproteins. This chain is Alpha-lactalbumin (LALBA), found in Notamacropus rufogriseus (Red-necked wallaby).